Reading from the N-terminus, the 82-residue chain is UPF0213 protein MW0443 (82 aa).

The 76-residue stretch at 2-77 (DSHFVYIVKC…KTYTRQKKLR (76 aa)) folds into the GIY-YIG domain.

It belongs to the UPF0213 family.

This is UPF0213 protein MW0443 from Staphylococcus aureus (strain MW2).